Reading from the N-terminus, the 461-residue chain is METLFNGTLLVGGRDQDSTGFAWWAGNARLINLSGKLLGAHVAHAGLIVFWAGAMNLFEVAHFVPEKPMYEQGLILLPHLATLGWGVGPGGEVIDTFPYFVSGVLHLISSAVLGFGGVYHSLIGPETLEESFPFFGYVWKDKNKMTTILGIHLILLGAGALLLVGKAMYFGGVYDTWAPGGGDVRVITNPTGNPATIFGYLLKSPFGGEGWICSVDNMEDIIGGHLWIGFICIAGGIWHILTKPFAWARRALVWSGEAYLSYSLGAVSVMAFTACCFVWFNNTAYPSEFYGPTGPEASQAQAFTFLVRDQRLGANVGSAQGPTGLGKYLMRSPTGEIIFGGETMRFWDLRAPWLEPLRGPNGLDLNKLRNDIQPWQERRSAEYMTHAPLGSLNSVGGVATEINAVNYVSPRSWLSTSHFVLGFFFFVAHLWHAGRARAAAAGFEKGIERETEPALSMKPLN.

The propeptide occupies 1–2 (ME). An N-acetylthreonine modification is found at T3. T3 is modified (phosphothreonine). The next 5 membrane-spanning stretches (helical) occupy residues 57 to 81 (LFEV…PHLA), 122 to 143 (LIGP…KDKN), 166 to 188 (KAMY…RVIT), 243 to 263 (KPFA…LSYS), and 279 to 300 (WFNN…ASQA). E355 is a binding site for [CaMn4O5] cluster. The chain crosses the membrane as a helical span at residues 435–459 (RARAAAAGFEKGIERETEPALSMKP).

It belongs to the PsbB/PsbC family. PsbC subfamily. In terms of assembly, PSII is composed of 1 copy each of membrane proteins PsbA, PsbB, PsbC, PsbD, PsbE, PsbF, PsbH, PsbI, PsbJ, PsbK, PsbL, PsbM, PsbT, PsbX, PsbY, PsbZ, Psb30/Ycf12, at least 3 peripheral proteins of the oxygen-evolving complex and a large number of cofactors. It forms dimeric complexes. The cofactor is Binds multiple chlorophylls and provides some of the ligands for the Ca-4Mn-5O cluster of the oxygen-evolving complex. It may also provide a ligand for a Cl- that is required for oxygen evolution. PSII binds additional chlorophylls, carotenoids and specific lipids..

The protein localises to the plastid. The protein resides in the chloroplast thylakoid membrane. Its function is as follows. One of the components of the core complex of photosystem II (PSII). It binds chlorophyll and helps catalyze the primary light-induced photochemical processes of PSII. PSII is a light-driven water:plastoquinone oxidoreductase, using light energy to abstract electrons from H(2)O, generating O(2) and a proton gradient subsequently used for ATP formation. In Chlorokybus atmophyticus (Soil alga), this protein is Photosystem II CP43 reaction center protein.